The primary structure comprises 304 residues: Non-specific ribonucleoside hydrolase RihC (304 aa).

The active site involves histidine 233.

This sequence belongs to the IUNH family. RihC subfamily.

In terms of biological role, hydrolyzes both purine and pyrimidine ribonucleosides with a broad-substrate specificity. The sequence is that of Non-specific ribonucleoside hydrolase RihC from Shigella boydii serotype 18 (strain CDC 3083-94 / BS512).